Here is a 158-residue protein sequence, read N- to C-terminus: MAIHKEVSFLAYLLVLGMLLFVSAMEHVDAKACTLECGNLGYGICPRSEGSPENPICTNCCAGYKGCNYYSANGTFICEGQSHPKNPKACPRNCDPHIAYSKCPRSGGKTLIYPTGCTTCCTGYTDCYYFGKDGKFVCEGESIEPKACTLECDSRLHT.

Residues 1–24 (MAIHKEVSFLAYLLVLGMLLFVSA) form the signal peptide. A run of 2 repeats spans residues 29–86 (DAKA…HPKN) and 87–146 (PKAC…IEPK). 8 disulfides stabilise this stretch: Cys-33–Cys-121, Cys-37–Cys-117, Cys-45–Cys-127, Cys-57–Cys-94, Cys-60–Cys-78, Cys-61–Cys-90, Cys-67–Cys-103, and Cys-120–Cys-138.

This sequence belongs to the protease inhibitor I20 (potato type II proteinase inhibitor) family.

The sequence is that of Proteinase inhibitor type-2 from Solanum tuberosum (Potato).